The primary structure comprises 903 residues: Dual serine/threonine and tyrosine protein kinase (903 aa).

A coiled-coil region spans residues 382 to 414 (ANRKQEEMKEMIVETLESMKEQLLEDAANLEFT). The 255-residue stretch at 627 to 881 (PKLGRELGRG…PLLGIVQPSL (255 aa)) folds into the Protein kinase domain. ATP-binding positions include 633–641 (LGRGQYGVV) and Lys656. Asp752 serves as the catalytic Proton acceptor.

It belongs to the protein kinase superfamily. Ser/Thr protein kinase family.

The protein localises to the cytoplasm. It localises to the cell membrane. It is found in the apical cell membrane. The protein resides in the basolateral cell membrane. Its subcellular location is the cell junction. It carries out the reaction L-seryl-[protein] + ATP = O-phospho-L-seryl-[protein] + ADP + H(+). The catalysed reaction is L-threonyl-[protein] + ATP = O-phospho-L-threonyl-[protein] + ADP + H(+). It catalyses the reaction L-tyrosyl-[protein] + ATP = O-phospho-L-tyrosyl-[protein] + ADP + H(+). Its function is as follows. May act as a positive regulator of ERK phosphorylation downstream of fibroblast growth factor-receptor activation. May induce both caspase-dependent apoptosis and caspase-independent cell death. May play a role in the embryonic development. The polypeptide is Dual serine/threonine and tyrosine protein kinase (Pimephales promelas (Fathead minnow)).